The sequence spans 40 residues: MRGNPEVIDYLNMLIGGELAARDQYLIHSRMYEDWGLTKY.

In terms of domain architecture, Ferritin-like diiron spans 1-40 (MRGNPEVIDYLNMLIGGELAARDQYLIHSRMYEDWGLTKY). Glu-18 serves as a coordination point for Fe cation.

This sequence belongs to the bacterioferritin family. In terms of assembly, oligomer consisting of two types of subunits: light chain and heavy chain.

Its function is as follows. May perform analogous functions in iron detoxification and storage to that of animal ferritins. Contains approximately 750 iron atoms per molecule. The sequence is that of Bacterioferritin heavy chain from Absidia spinosa.